The primary structure comprises 195 residues: Imidazoleglycerol-phosphate dehydratase (195 aa).

It belongs to the imidazoleglycerol-phosphate dehydratase family.

It localises to the cytoplasm. The catalysed reaction is D-erythro-1-(imidazol-4-yl)glycerol 3-phosphate = 3-(imidazol-4-yl)-2-oxopropyl phosphate + H2O. It functions in the pathway amino-acid biosynthesis; L-histidine biosynthesis; L-histidine from 5-phospho-alpha-D-ribose 1-diphosphate: step 6/9. This is Imidazoleglycerol-phosphate dehydratase from Cereibacter sphaeroides (strain ATCC 17023 / DSM 158 / JCM 6121 / CCUG 31486 / LMG 2827 / NBRC 12203 / NCIMB 8253 / ATH 2.4.1.) (Rhodobacter sphaeroides).